A 794-amino-acid polypeptide reads, in one-letter code: PAN2-PAN3 deadenylation complex subunit PAN3 (794 aa).

The C3H1-type zinc-finger motif lies at S7–Q36. Disordered stretches follow at residues P40–K97 and A187–L226. Polar residues-rich tracts occupy residues I83–T94 and V189–A199. The segment covering N200 to L226 has biased composition (low complexity). Residues Q372–S668 are pseudokinase domain. ATP-binding positions include R425 and D494–T501. Residues S669–F707 are a coiled coil. The tract at residues I708–G794 is knob domain.

Belongs to the protein kinase superfamily. PAN3 family. In terms of assembly, homodimer. Forms a heterotrimer with a catalytic subunit PAN2 to form the poly(A)-nuclease (PAN) deadenylation complex. Interacts (via PAM-2 motif) with poly(A)-binding protein PAB1 (via PABC domain), conferring substrate specificity of the enzyme complex.

Its subcellular location is the cytoplasm. Its function is as follows. Regulatory subunit of the poly(A)-nuclease (PAN) deadenylation complex, one of two cytoplasmic mRNA deadenylases involved in mRNA turnover. PAN specifically shortens poly(A) tails of RNA and the activity is stimulated by poly(A)-binding protein PAB1. PAN deadenylation is followed by rapid degradation of the shortened mRNA tails by the CCR4-NOT complex. Deadenylated mRNAs are then degraded by two alternative mechanisms, namely exosome-mediated 3'-5' exonucleolytic degradation, or deadenylation-dependent mRNA decaping and subsequent 5'-3' exonucleolytic degradation by XRN1. May also be involved in post-transcriptional maturation of mRNA poly(A) tails. PAN3 acts as a positive regulator for PAN activity, recruiting the catalytic subunit PAN2 to mRNA via its interaction with RNA and with PAB1. This chain is PAN2-PAN3 deadenylation complex subunit PAN3, found in Lodderomyces elongisporus (strain ATCC 11503 / CBS 2605 / JCM 1781 / NBRC 1676 / NRRL YB-4239) (Yeast).